A 334-amino-acid polypeptide reads, in one-letter code: Dipeptide transport ATP-binding protein DppF (334 aa).

Residues 13-262 (LQAIDLKKHY…PRHPYTQALL (250 aa)) form the ABC transporter domain. Residue 55 to 62 (GESGCGKS) coordinates ATP.

The protein belongs to the ABC transporter superfamily. In terms of assembly, the complex is composed of two ATP-binding proteins (DppD and DppF), two transmembrane proteins (DppB and DppC) and a solute-binding protein (DppA). MppA can replace DppA as binding protein for heme and ALA transport.

It is found in the cell inner membrane. It carries out the reaction a dipeptide(out) + ATP + H2O = a dipeptide(in) + ADP + phosphate + H(+). In terms of biological role, part of the ABC transporter DppABCDF involved in dipeptide transport. Responsible for energy coupling to the transport system. Functionally, when a foreign outer membrane heme receptor is expressed in E.coli, DppABCDF can also transport heme and its precursor, 5-aminolevulinic acid (ALA), from the periplasm into the cytoplasm. The protein is Dipeptide transport ATP-binding protein DppF (dppF) of Escherichia coli (strain K12).